The chain runs to 255 residues: ATP-dependent L-serine kinase (255 aa).

Glu-36 is an active-site residue. An O-phospho-L-serine-binding site is contributed by Val-74. Residue Asp-75 coordinates Mg(2+). Residues Gly-76, His-77, His-78, Trp-108, Lys-234, Thr-236, and His-238 each coordinate O-phospho-L-serine.

Belongs to the SerK family. Mg(2+) serves as cofactor.

The catalysed reaction is L-serine + ATP = O-phospho-L-serine + ADP + H(+). Free serine kinase that uses ATP to phosphorylate L-serine to yield O-phospho-L-serine and ADP. The polypeptide is ATP-dependent L-serine kinase (Desulfurococcus mucosus (strain ATCC 35584 / DSM 2162 / JCM 9187 / O7/1)).